Reading from the N-terminus, the 1551-residue chain is Serine/threonine-protein kinase MRCK gamma (1551 aa).

The Protein kinase domain maps to 71-337; it reads FEILKVIGRG…LDDFRNHPFF (267 aa). ATP is bound by residues 77-85 and K100; that span reads IGRGAFGEV. D195 (proton acceptor) is an active-site residue. S216 and S228 each carry phosphoserine; by autocatalysis. The residue at position 234 (T234) is a Phosphothreonine; by autocatalysis. The 71-residue stretch at 338 to 408 folds into the AGC-kinase C-terminal domain; it reads EGVDWERLAS…TSGSHSPESS (71 aa). 2 coiled-coil regions span residues 406–678 and 730–802; these read ESSS…SNWE and KARR…RARG. Disordered regions lie at residues 467 to 486, 655 to 675, 801 to 849, and 863 to 886; these read KASL…QDSD, ELAQ…ETES, RGPV…PEGR, and TANT…PRSF. A compositionally biased stretch (basic and acidic residues) spans 655 to 674; the sequence is ELAQEQESKQRLEGERRETE. Residues 835–849 show a composition bias toward basic and acidic residues; it reads ATRHGGEPDLRPEGR. Residues 878 to 927 form a Phorbol-ester/DAG-type zinc finger; that stretch reads SHTLRPRSFPSPTKCLRCTSLMLGLGRQGLGCDACGYFCHTTCAPQAPPC. Residues 947 to 1066 form the PH domain; sequence GTAYEGFLSV…WLQVLGELQR (120 aa). The CNH domain occupies 1092 to 1366; sequence LPHTLCAAIL…RPLNPEGSLF (275 aa). The region spanning 1437–1450 is the CRIB domain; that stretch reads ISPPTNFNHLVHVG. Residues 1442–1551 form a disordered region; sequence NFNHLVHVGP…PLSPELESSP (110 aa). Over residues 1457–1470 the composition is skewed to basic and acidic residues; sequence GARDKSPAPEEKGR. S1482 carries the phosphoserine modification. The span at 1511–1533 shows a compositional bias: polar residues; sequence TSLSSESVSCPQGSLSPATSLMQ. Over residues 1540-1551 the composition is skewed to low complexity; sequence SLPLSPELESSP.

It belongs to the protein kinase superfamily. AGC Ser/Thr protein kinase family. DMPK subfamily. In terms of assembly, homodimer and homotetramer via the coiled coil regions. Interacts tightly with GTP-bound but not GDP-bound CDC42. Requires Mg(2+) as cofactor. In terms of tissue distribution, expressed in heart and skeletal muscle.

Its subcellular location is the cytoplasm. The enzyme catalyses L-seryl-[protein] + ATP = O-phospho-L-seryl-[protein] + ADP + H(+). The catalysed reaction is L-threonyl-[protein] + ATP = O-phospho-L-threonyl-[protein] + ADP + H(+). With respect to regulation, maintained in an inactive, closed conformation by an interaction between the kinase domain and the negative autoregulatory C-terminal coiled-coil region. Agonist binding to the phorbol ester binding site disrupts this, releasing the kinase domain to allow N-terminus-mediated dimerization and kinase activation by transautophosphorylation. In terms of biological role, may act as a downstream effector of CDC42 in cytoskeletal reorganization. Contributes to the actomyosin contractility required for cell invasion, through the regulation of MYPT1 and thus MLC2 phosphorylation. This is Serine/threonine-protein kinase MRCK gamma from Homo sapiens (Human).